The chain runs to 119 residues: MPRVKRGVTARARHKKVLALAKGFRGRRGNVFRIAKQAVMKAGQYAYRDRRTKKRVFRQLWIARINAAARELGLTYSQFANGLKKASIEIDRKMLADLAVHDKAAFGSIVEQVKAKLAA.

This sequence belongs to the bacterial ribosomal protein bL20 family.

Binds directly to 23S ribosomal RNA and is necessary for the in vitro assembly process of the 50S ribosomal subunit. It is not involved in the protein synthesizing functions of that subunit. The polypeptide is Large ribosomal subunit protein bL20 (Acidovorax sp. (strain JS42)).